The following is a 341-amino-acid chain: Anthranilate phosphoribosyltransferase (341 aa).

5-phospho-alpha-D-ribose 1-diphosphate-binding positions include Gly-79, 82–83 (GD), Thr-87, 89–92 (NIST), 107–115 (KHGNRAVSS), and Ser-119. Residue Gly-79 coordinates anthranilate. Residue Ser-91 participates in Mg(2+) binding. Asn-110 is a binding site for anthranilate. Arg-165 lines the anthranilate pocket. 2 residues coordinate Mg(2+): Asp-224 and Glu-225.

Belongs to the anthranilate phosphoribosyltransferase family. As to quaternary structure, homodimer. Mg(2+) is required as a cofactor.

The catalysed reaction is N-(5-phospho-beta-D-ribosyl)anthranilate + diphosphate = 5-phospho-alpha-D-ribose 1-diphosphate + anthranilate. The protein operates within amino-acid biosynthesis; L-tryptophan biosynthesis; L-tryptophan from chorismate: step 2/5. Its function is as follows. Catalyzes the transfer of the phosphoribosyl group of 5-phosphorylribose-1-pyrophosphate (PRPP) to anthranilate to yield N-(5'-phosphoribosyl)-anthranilate (PRA). In Bacillus thuringiensis subsp. konkukian (strain 97-27), this protein is Anthranilate phosphoribosyltransferase.